Here is a 300-residue protein sequence, read N- to C-terminus: Ecto-ADP-ribosyltransferase 4 (300 aa).

The N-terminal stretch at 1–23 (MALWLPGGQLTLLLLLWVQQTPA) is a signal peptide. Over 24 to 269 (GSTEAPLKVD…QLLKACSKKC (246 aa)) the chain is Extracellular. 2 disulfides stabilise this stretch: C48–C259 and C161–C210. The TR mART core domain occupies 70–255 (KYYSRAWQKA…INLRSAGNMS (186 aa)). Residues N110 and N157 are each glycosylated (N-linked (GlcNAc...) asparagine). Q185 serves as a coordination point for NAD(+). The N-linked (GlcNAc...) asparagine glycan is linked to N201. Residue S219 coordinates NAD(+). N253 is a glycosylation site (N-linked (GlcNAc...) asparagine). A lipid anchor (GPI-anchor amidated alanine) is attached at A264. The propeptide at 265 to 300 (CSKKCAPAPVVIGCLFLVTVVISSKSRAQRNLLAPF) is removed in mature form. The helical transmembrane segment at 270–286 (APAPVVIGCLFLVTVVI) threads the bilayer. The Cytoplasmic portion of the chain corresponds to 287 to 300 (SSKSRAQRNLLAPF).

The protein belongs to the Arg-specific ADP-ribosyltransferase family.

Its subcellular location is the membrane. It is found in the cell membrane. It carries out the reaction L-arginyl-[protein] + NAD(+) = N(omega)-(ADP-D-ribosyl)-L-arginyl-[protein] + nicotinamide + H(+). This chain is Ecto-ADP-ribosyltransferase 4 (Art4), found in Mus musculus (Mouse).